The following is a 235-amino-acid chain: Orotidine 5'-phosphate decarboxylase (235 aa).

Substrate-binding positions include aspartate 17, lysine 39, 66-75 (DMKLLDIDHT), threonine 121, arginine 182, glutamine 191, and arginine 212. Lysine 68 (proton donor) is an active-site residue.

Belongs to the OMP decarboxylase family. Type 1 subfamily. In terms of assembly, homodimer.

It carries out the reaction orotidine 5'-phosphate + H(+) = UMP + CO2. The protein operates within pyrimidine metabolism; UMP biosynthesis via de novo pathway; UMP from orotate: step 2/2. In terms of biological role, catalyzes the decarboxylation of orotidine 5'-monophosphate (OMP) to uridine 5'-monophosphate (UMP). This chain is Orotidine 5'-phosphate decarboxylase, found in Bartonella bacilliformis.